Consider the following 1407-residue polypeptide: DNA-directed RNA polymerase subunit beta' (1407 aa).

4 residues coordinate Zn(2+): C70, C72, C85, and C88. Mg(2+) is bound by residues D460, D462, and D464. Positions 814, 888, 895, and 898 each coordinate Zn(2+).

It belongs to the RNA polymerase beta' chain family. The RNAP catalytic core consists of 2 alpha, 1 beta, 1 beta' and 1 omega subunit. When a sigma factor is associated with the core the holoenzyme is formed, which can initiate transcription. It depends on Mg(2+) as a cofactor. Zn(2+) is required as a cofactor.

The catalysed reaction is RNA(n) + a ribonucleoside 5'-triphosphate = RNA(n+1) + diphosphate. In terms of biological role, DNA-dependent RNA polymerase catalyzes the transcription of DNA into RNA using the four ribonucleoside triphosphates as substrates. In Cellvibrio japonicus (strain Ueda107) (Pseudomonas fluorescens subsp. cellulosa), this protein is DNA-directed RNA polymerase subunit beta'.